The chain runs to 95 residues: Large ribosomal subunit protein uL22c (95 aa).

Belongs to the universal ribosomal protein uL22 family. As to quaternary structure, part of the 50S ribosomal subunit.

Its subcellular location is the plastid. It localises to the chloroplast. This protein binds specifically to 23S rRNA. Functionally, the globular domain of the protein is located near the polypeptide exit tunnel on the outside of the subunit, while an extended beta-hairpin is found that lines the wall of the exit tunnel in the center of the 70S ribosome. This Cyanidioschyzon merolae (strain NIES-3377 / 10D) (Unicellular red alga) protein is Large ribosomal subunit protein uL22c (rpl22).